A 104-amino-acid chain; its full sequence is DNA-directed RNA polymerase subunit omega (104 aa).

It belongs to the RNA polymerase subunit omega family. In terms of assembly, the RNAP catalytic core consists of 2 alpha, 1 beta, 1 beta' and 1 omega subunit. When a sigma factor is associated with the core the holoenzyme is formed, which can initiate transcription.

It carries out the reaction RNA(n) + a ribonucleoside 5'-triphosphate = RNA(n+1) + diphosphate. In terms of biological role, promotes RNA polymerase assembly. Latches the N- and C-terminal regions of the beta' subunit thereby facilitating its interaction with the beta and alpha subunits. This Streptococcus thermophilus (strain CNRZ 1066) protein is DNA-directed RNA polymerase subunit omega.